A 112-amino-acid polypeptide reads, in one-letter code: UPF0102 protein Pmob_0702 (112 aa).

It belongs to the UPF0102 family.

This Petrotoga mobilis (strain DSM 10674 / SJ95) protein is UPF0102 protein Pmob_0702.